A 402-amino-acid chain; its full sequence is S-adenosylmethionine synthase (402 aa).

Histidine 15 is an ATP binding site. Residue aspartate 17 participates in Mg(2+) binding. Glutamate 43 serves as a coordination point for K(+). 2 residues coordinate L-methionine: glutamate 56 and glutamine 99. Positions 99–109 are flexible loop; the sequence is QSPDIAQGVDT. Residues 174–176, 247–248, aspartate 256, 262–263, alanine 279, and lysine 283 contribute to the ATP site; these read DGK, RF, and RK. An L-methionine-binding site is contributed by aspartate 256. L-methionine is bound at residue lysine 287.

The protein belongs to the AdoMet synthase family. In terms of assembly, homotetramer; dimer of dimers. The cofactor is Mg(2+). K(+) serves as cofactor.

It localises to the cytoplasm. The catalysed reaction is L-methionine + ATP + H2O = S-adenosyl-L-methionine + phosphate + diphosphate. It functions in the pathway amino-acid biosynthesis; S-adenosyl-L-methionine biosynthesis; S-adenosyl-L-methionine from L-methionine: step 1/1. In terms of biological role, catalyzes the formation of S-adenosylmethionine (AdoMet) from methionine and ATP. The overall synthetic reaction is composed of two sequential steps, AdoMet formation and the subsequent tripolyphosphate hydrolysis which occurs prior to release of AdoMet from the enzyme. This Streptomyces coelicolor (strain ATCC BAA-471 / A3(2) / M145) protein is S-adenosylmethionine synthase.